The chain runs to 1847 residues: Replication factor C small subunit (1847 aa).

3 DOD-type homing endonuclease domains span residues 179–311 (WLGY…RFGI), 780–927 (MLGL…ISGI), and 1348–1508 (LLGF…EFEV).

Belongs to the activator 1 small subunits family. RfcS subfamily. As to quaternary structure, heteromultimer composed of small subunits (RfcS) and large subunits (RfcL). Post-translationally, this protein undergoes a protein self splicing that involves a post-translational excision of the intervening region (intein) followed by peptide ligation.

Its function is as follows. Part of the RFC clamp loader complex which loads the PCNA sliding clamp onto DNA. This chain is Replication factor C small subunit (rfcS), found in Methanocaldococcus jannaschii (strain ATCC 43067 / DSM 2661 / JAL-1 / JCM 10045 / NBRC 100440) (Methanococcus jannaschii).